Reading from the N-terminus, the 451-residue chain is uncharacterized protein (451 aa).

The TRAM domain occupies 2–60 (NLKVKQKIPLKIKRMGINGEGIGFYQKTLVFVPGALKGEDIYCQITSIRRNFVEAKLLK). [4Fe-4S] cluster-binding residues include Cys73, Cys79, Cys82, and Cys162. The S-adenosyl-L-methionine site is built by Gln283, Tyr312, Asp333, and Asp381. Cys408 functions as the Nucleophile in the catalytic mechanism.

The protein belongs to the class I-like SAM-binding methyltransferase superfamily. RNA M5U methyltransferase family.

This is an uncharacterized protein from Streptococcus pneumoniae serotype 4 (strain ATCC BAA-334 / TIGR4).